Consider the following 288-residue polypeptide: Bifunctional protein FolD (288 aa).

NADP(+)-binding positions include Gly-166–Ser-168 and Ile-232.

This sequence belongs to the tetrahydrofolate dehydrogenase/cyclohydrolase family. Homodimer.

It catalyses the reaction (6R)-5,10-methylene-5,6,7,8-tetrahydrofolate + NADP(+) = (6R)-5,10-methenyltetrahydrofolate + NADPH. It carries out the reaction (6R)-5,10-methenyltetrahydrofolate + H2O = (6R)-10-formyltetrahydrofolate + H(+). The protein operates within one-carbon metabolism; tetrahydrofolate interconversion. Its function is as follows. Catalyzes the oxidation of 5,10-methylenetetrahydrofolate to 5,10-methenyltetrahydrofolate and then the hydrolysis of 5,10-methenyltetrahydrofolate to 10-formyltetrahydrofolate. This is Bifunctional protein FolD from Salmonella heidelberg (strain SL476).